An 83-amino-acid chain; its full sequence is Exodeoxyribonuclease 7 small subunit (83 aa).

The protein belongs to the XseB family. Heterooligomer composed of large and small subunits.

The protein resides in the cytoplasm. It catalyses the reaction Exonucleolytic cleavage in either 5'- to 3'- or 3'- to 5'-direction to yield nucleoside 5'-phosphates.. In terms of biological role, bidirectionally degrades single-stranded DNA into large acid-insoluble oligonucleotides, which are then degraded further into small acid-soluble oligonucleotides. The chain is Exodeoxyribonuclease 7 small subunit from Rhizobium rhizogenes (strain K84 / ATCC BAA-868) (Agrobacterium radiobacter).